The sequence spans 113 residues: Large ribosomal subunit protein uL22 (113 aa).

This sequence belongs to the universal ribosomal protein uL22 family. As to quaternary structure, part of the 50S ribosomal subunit.

Its function is as follows. This protein binds specifically to 23S rRNA; its binding is stimulated by other ribosomal proteins, e.g. L4, L17, and L20. It is important during the early stages of 50S assembly. It makes multiple contacts with different domains of the 23S rRNA in the assembled 50S subunit and ribosome. The globular domain of the protein is located near the polypeptide exit tunnel on the outside of the subunit, while an extended beta-hairpin is found that lines the wall of the exit tunnel in the center of the 70S ribosome. This Chloroflexus aggregans (strain MD-66 / DSM 9485) protein is Large ribosomal subunit protein uL22.